We begin with the raw amino-acid sequence, 331 residues long: D-lactate/D-glycerate dehydrogenase (331 aa).

NAD(+)-binding positions include 154–155, Asp-174, 205–206, Asn-211, 232–234, and Asp-258; these read RI, VP, and FAR. Arg-234 is an active-site residue. Glu-263 is a catalytic residue. Catalysis depends on His-295, which acts as the Proton donor.

The protein belongs to the D-isomer specific 2-hydroxyacid dehydrogenase family. In terms of assembly, homodimer.

The enzyme catalyses (R)-lactate + NAD(+) = pyruvate + NADH + H(+). The catalysed reaction is (R)-glycerate + NAD(+) = 3-hydroxypyruvate + NADH + H(+). Its function is as follows. Has both D-lactate and D-glycerate dehydrogenase activities. Equally active on pyruvate and hydroxypyruvate. This is D-lactate/D-glycerate dehydrogenase from Pediococcus acidilactici.